We begin with the raw amino-acid sequence, 238 residues long: Purine nucleoside phosphorylase DeoD-type (238 aa).

Position 4 (histidine 4) interacts with a purine D-ribonucleoside. Residues glycine 20, arginine 24, arginine 43, and 87–90 each bind phosphate; that span reads RVGS. Residues 179-181 and 203-204 each bind a purine D-ribonucleoside; these read EME and SD. The Proton donor role is filled by aspartate 204.

Belongs to the PNP/UDP phosphorylase family. In terms of assembly, homohexamer; trimer of homodimers.

The enzyme catalyses a purine D-ribonucleoside + phosphate = a purine nucleobase + alpha-D-ribose 1-phosphate. It carries out the reaction a purine 2'-deoxy-D-ribonucleoside + phosphate = a purine nucleobase + 2-deoxy-alpha-D-ribose 1-phosphate. Catalyzes the reversible phosphorolytic breakdown of the N-glycosidic bond in the beta-(deoxy)ribonucleoside molecules, with the formation of the corresponding free purine bases and pentose-1-phosphate. The protein is Purine nucleoside phosphorylase DeoD-type of Haemophilus influenzae (strain 86-028NP).